The following is a 94-amino-acid chain: MFTINAEVRKEQGKGASRRLRRANKFPAIVYGGNQELVSIELDHDQVINMEQKAEFYSDVLTLVIDGKETKVKVQAVQRHPFKPKLAHIDFLRA.

It belongs to the bacterial ribosomal protein bL25 family. As to quaternary structure, part of the 50S ribosomal subunit; part of the 5S rRNA/L5/L18/L25 subcomplex. Contacts the 5S rRNA. Binds to the 5S rRNA independently of L5 and L18.

In terms of biological role, this is one of the proteins that binds to the 5S RNA in the ribosome where it forms part of the central protuberance. The polypeptide is Large ribosomal subunit protein bL25 (Photorhabdus laumondii subsp. laumondii (strain DSM 15139 / CIP 105565 / TT01) (Photorhabdus luminescens subsp. laumondii)).